We begin with the raw amino-acid sequence, 355 residues long: Blue-sensitive opsin P467 (355 aa).

The Extracellular segment spans residues 1–36 (MNGTEGINFYVPLSNKTGLVRSPFEYPQYYLADPWK). Asn-2 and Asn-15 each carry an N-linked (GlcNAc...) asparagine glycan. A helical transmembrane segment spans residues 37–61 (FKVLSFYMFFLIAAGMPLNGLTLFV). Over 62–73 (TFQHKKLRQPLN) the chain is Cytoplasmic. A helical membrane pass occupies residues 74–98 (YILVNLAAANLVTVCCGFTVTFYAS). The Extracellular portion of the chain corresponds to 99-113 (WYAYFVFGPIGCAIE). Cys-110 and Cys-187 are disulfide-bonded. The helical transmembrane segment at 114–133 (GFFATIGGQVALWSLVVLAI) threads the bilayer. Topologically, residues 134–152 (ERYIVICKPMGNFRFSATH) are cytoplasmic. Residues 153 to 176 (AIMGIAFTWFMALACAGPPLFGWS) traverse the membrane as a helical segment. Residues 177–202 (RFIPEGMQCSCGPDYYTLNPDFHNES) lie on the Extracellular side of the membrane. Asn-200 carries N-linked (GlcNAc...) asparagine glycosylation. The helical transmembrane segment at 203-230 (YVIYMFIVHFTVPMVVIFFSYGRLVCKV) threads the bilayer. The Cytoplasmic portion of the chain corresponds to 231–252 (REAAAQQQESATTQKAEKEVTR). A helical transmembrane segment spans residues 253-276 (MVILMVLGFLLAWTPYAATAIWIF). At 277 to 284 (TNRGAAFS) the chain is on the extracellular side. A helical membrane pass occupies residues 285 to 309 (VTFMTIPAFFSKSSSIYNPIIYVLL). Position 296 is an N6-(retinylidene)lysine (Lys-296). The Cytoplasmic portion of the chain corresponds to 310 to 355 (NKQFRNCMVTTICCGKNPFGDEDVSSSVSQSKTEVSSVSSSQVAPA). Residues 333–355 (VSSSVSQSKTEVSSVSSSQVAPA) form a disordered region. The segment covering 334–355 (SSSVSQSKTEVSSVSSSQVAPA) has biased composition (low complexity).

The protein belongs to the G-protein coupled receptor 1 family. Opsin subfamily. Post-translationally, phosphorylated on some or all of the serine and threonine residues present in the C-terminal region. In terms of tissue distribution, in this lizard the color pigments are found in the rod-shaped photoreceptor cells which have been derived from ancestral cone-like photoreceptors.

Its subcellular location is the membrane. In terms of biological role, visual pigments are the light-absorbing molecules that mediate vision. They consist of an apoprotein, opsin, covalently linked to cis-retinal. In Gekko gecko (Tokay gecko), this protein is Blue-sensitive opsin P467.